Consider the following 438-residue polypeptide: 23S rRNA (uracil(1939)-C(5))-methyltransferase RlmD (438 aa).

The TRAM domain occupies 8–68; it reads KQKTNNVQTI…RQYGHATAKK (61 aa). Residues C81, C87, C90, and C168 each contribute to the [4Fe-4S] cluster site. Residues Q271, F300, N305, E321, D348, and D369 each coordinate S-adenosyl-L-methionine. C395 functions as the Nucleophile in the catalytic mechanism.

It belongs to the class I-like SAM-binding methyltransferase superfamily. RNA M5U methyltransferase family. RlmD subfamily.

It catalyses the reaction uridine(1939) in 23S rRNA + S-adenosyl-L-methionine = 5-methyluridine(1939) in 23S rRNA + S-adenosyl-L-homocysteine + H(+). Its function is as follows. Catalyzes the formation of 5-methyl-uridine at position 1939 (m5U1939) in 23S rRNA. The protein is 23S rRNA (uracil(1939)-C(5))-methyltransferase RlmD of Haemophilus influenzae (strain 86-028NP).